The following is a 527-amino-acid chain: Splicing factor MUD2 (527 aa).

The tract at residues 36 to 169 (DNAVIDTHFK…SKFNGDRDKR (134 aa)) is disordered. Over residues 42–55 (THFKRQKSDGELPK) the composition is skewed to basic and acidic residues. S49 carries the phosphoserine modification. Residues 60 to 85 (RNVSHSNNRGPSSIITMSTNRTTYEQ) show a composition bias toward polar residues. The segment covering 94–109 (SYRDASGRSYNRENRY) has biased composition (basic and acidic residues). A compositionally biased stretch (polar residues) spans 110 to 122 (SSHNTGPQWNNNP). Composition is skewed to basic and acidic residues over residues 125-141 (RQRD…DRRG) and 155-169 (RKNE…RDKR). An RRM domain is found at 424-511 (LLLLNCLDPL…QFNDRTVLCT (88 aa)).

MSL5, MUD2 and PRP40 interact to form the commitment complex 2 (CC2), a precursor of mature spliceosomes.

Its function is as follows. Splicing factor that contacts pre-mRNA directly and is a component of the pre-mRNA-U1 snRNP complex (commitment complex 2) that forms during early spliceosome assembly in yeast extracts. This chain is Splicing factor MUD2 (MUD2), found in Saccharomyces cerevisiae (strain ATCC 204508 / S288c) (Baker's yeast).